We begin with the raw amino-acid sequence, 208 residues long: Sodium/potassium-transporting ATPase subunit beta-1-interacting protein 4 (208 aa).

4 helical membrane passes run 10–30 (LILL…FDFL), 35–55 (APIL…FGTL), 62–82 (VIAY…LICF), and 151–171 (ALQI…TSVF).

Belongs to the NKAIN family. Interacts with atp1b1 C-terminus.

It is found in the cell membrane. The protein is Sodium/potassium-transporting ATPase subunit beta-1-interacting protein 4 (nkain4) of Xenopus tropicalis (Western clawed frog).